Here is a 323-residue protein sequence, read N- to C-terminus: Ig gamma chain C region (323 aa).

Ig-like domains are found at residues P6–A96, P114–S213, and P222–S318.

The protein is Ig gamma chain C region of Oryctolagus cuniculus (Rabbit).